The following is a 306-amino-acid chain: Protease HtpX homolog (306 aa).

2 consecutive transmembrane segments (helical) span residues Thr10 to Gly30 and Gln33 to Ser53. A Zn(2+)-binding site is contributed by His135. Residue Glu136 is part of the active site. His139 provides a ligand contact to Zn(2+). 2 helical membrane passes run Ala149–Gly169 and Gly181–Ile201. Residue Glu210 participates in Zn(2+) binding.

This sequence belongs to the peptidase M48B family. Requires Zn(2+) as cofactor.

The protein localises to the cell membrane. The sequence is that of Protease HtpX homolog from Bifidobacterium longum (strain NCC 2705).